A 271-amino-acid chain; its full sequence is uncharacterized protein (271 aa).

A DOD-type homing endonuclease domain is found at 77–205 (IIGVYFGDAN…SKELLKKLDV (129 aa)).

This is an uncharacterized protein from Methanocaldococcus jannaschii (strain ATCC 43067 / DSM 2661 / JAL-1 / JCM 10045 / NBRC 100440) (Methanococcus jannaschii).